The sequence spans 576 residues: Sulfite reductase [NADPH] hemoprotein beta-component (576 aa).

[4Fe-4S] cluster contacts are provided by C434, C440, C479, and C483. C483 lines the siroheme pocket.

It belongs to the nitrite and sulfite reductase 4Fe-4S domain family. In terms of assembly, alpha(8)-beta(8). The alpha component is a flavoprotein, the beta component is a hemoprotein. The cofactor is siroheme. Requires [4Fe-4S] cluster as cofactor.

The enzyme catalyses hydrogen sulfide + 3 NADP(+) + 3 H2O = sulfite + 3 NADPH + 4 H(+). Its pathway is sulfur metabolism; hydrogen sulfide biosynthesis; hydrogen sulfide from sulfite (NADPH route): step 1/1. Its function is as follows. Component of the sulfite reductase complex that catalyzes the 6-electron reduction of sulfite to sulfide. This is one of several activities required for the biosynthesis of L-cysteine from sulfate. This is Sulfite reductase [NADPH] hemoprotein beta-component from Oceanobacillus iheyensis (strain DSM 14371 / CIP 107618 / JCM 11309 / KCTC 3954 / HTE831).